We begin with the raw amino-acid sequence, 877 residues long: Alanine--tRNA ligase (877 aa).

Zn(2+) contacts are provided by His-567, His-571, Cys-669, and His-673.

This sequence belongs to the class-II aminoacyl-tRNA synthetase family. Zn(2+) serves as cofactor.

The protein localises to the cytoplasm. The enzyme catalyses tRNA(Ala) + L-alanine + ATP = L-alanyl-tRNA(Ala) + AMP + diphosphate. Functionally, catalyzes the attachment of alanine to tRNA(Ala) in a two-step reaction: alanine is first activated by ATP to form Ala-AMP and then transferred to the acceptor end of tRNA(Ala). Also edits incorrectly charged Ser-tRNA(Ala) and Gly-tRNA(Ala) via its editing domain. In Lactobacillus delbrueckii subsp. bulgaricus (strain ATCC 11842 / DSM 20081 / BCRC 10696 / JCM 1002 / NBRC 13953 / NCIMB 11778 / NCTC 12712 / WDCM 00102 / Lb 14), this protein is Alanine--tRNA ligase.